We begin with the raw amino-acid sequence, 644 residues long: 3D-(3,5/4)-trihydroxycyclohexane-1,2-dione hydrolase (644 aa).

E65 serves as a coordination point for thiamine diphosphate. The interval 442-522 (SLPGDLQRMW…INVLLFDNSG (81 aa)) is thiamine pyrophosphate binding. 2 residues coordinate Mg(2+): D493 and N520.

This sequence belongs to the TPP enzyme family. The cofactor is Mg(2+). It depends on thiamine diphosphate as a cofactor.

The catalysed reaction is 3D-3,5/4-trihydroxycyclohexane-1,2-dione + H2O = 5-deoxy-D-glucuronate + H(+). It participates in polyol metabolism; myo-inositol degradation into acetyl-CoA; acetyl-CoA from myo-inositol: step 3/7. Its function is as follows. Involved in the cleavage of the C1-C2 bond of 3D-(3,5/4)-trihydroxycyclohexane-1,2-dione (THcHDO) to yield 5-deoxy-glucuronate (5DG). The polypeptide is 3D-(3,5/4)-trihydroxycyclohexane-1,2-dione hydrolase (Bacillus anthracis (strain A0248)).